The sequence spans 185 residues: Elongation factor P (185 aa).

It belongs to the elongation factor P family.

The protein resides in the cytoplasm. The protein operates within protein biosynthesis; polypeptide chain elongation. Its function is as follows. Involved in peptide bond synthesis. Stimulates efficient translation and peptide-bond synthesis on native or reconstituted 70S ribosomes in vitro. Probably functions indirectly by altering the affinity of the ribosome for aminoacyl-tRNA, thus increasing their reactivity as acceptors for peptidyl transferase. In Burkholderia cenocepacia (strain HI2424), this protein is Elongation factor P.